A 383-amino-acid chain; its full sequence is Methenyltetrahydrofolate synthase domain-containing protein (383 aa).

Positions 249–301 (AGKDVTLQGEHQHLPEPGCQQTVPLSVGRRPPDTPGPETNSMEAAPGSPPGEG) are disordered. Residues 306–379 (ADVYVGNLPG…DTLRVALARQ (74 aa)) form the RRM domain.

The chain is Methenyltetrahydrofolate synthase domain-containing protein (MTHFSD) from Homo sapiens (Human).